A 530-amino-acid polypeptide reads, in one-letter code: [Pyruvate dehydrogenase [acetyl-transferring]]-phosphatase 2, mitochondrial (530 aa).

Residues 1–67 (MSSTASYRIF…FALRKAYRHT (67 aa)) constitute a mitochondrion transit peptide. A PPM-type phosphatase domain is found at 107–518 (VLRFESNQLA…DDITVMVVFF (412 aa)). Aspartate 142, glycine 143, aspartate 413, and aspartate 509 together coordinate Mn(2+).

Belongs to the PP2C family. Mg(2+) is required as a cofactor. As to expression, highly expressed in liver.

Its subcellular location is the mitochondrion. The enzyme catalyses O-phospho-L-seryl-[pyruvate dehydrogenase E1 alpha subunit] + H2O = L-seryl-[pyruvate dehydrogenase E1 alpha subunit] + phosphate. Mg(2+)-dependent protein phosphatase. Phosphatase activity is increased in the presence of spermine, a naturally produced polyamine. Functionally, mitochondrial enzyme that catalyzes the dephosphorylation and concomitant reactivation of the alpha subunit of the E1 component of the pyruvate dehydrogenase complex (PDC), thereby stimulating the conversion of pyruvate into acetyl-CoA. Acts as a crucial regulator of T cell metabolism and function, with a particular focus on T-helper Th17. The protein is [Pyruvate dehydrogenase [acetyl-transferring]]-phosphatase 2, mitochondrial (Pdp2) of Rattus norvegicus (Rat).